Here is a 332-residue protein sequence, read N- to C-terminus: Glyceraldehyde-3-phosphate dehydrogenase 2 (332 aa).

Residues Arg11–Ile12, Asp32, and Arg77 each bind NAD(+). D-glyceraldehyde 3-phosphate contacts are provided by residues Ser148–Thr150, Thr179, Thr208–Gly209, and Arg231. Cys149 acts as the Nucleophile in catalysis. Tyr273 bears the Phosphotyrosine mark. Thr274 bears the Phosphothreonine mark. Asn313 provides a ligand contact to NAD(+).

It belongs to the glyceraldehyde-3-phosphate dehydrogenase family. As to quaternary structure, homotetramer.

Its subcellular location is the cytoplasm. The enzyme catalyses D-glyceraldehyde 3-phosphate + phosphate + NAD(+) = (2R)-3-phospho-glyceroyl phosphate + NADH + H(+). It functions in the pathway carbohydrate degradation; glycolysis; pyruvate from D-glyceraldehyde 3-phosphate: step 1/5. This Drosophila melanogaster (Fruit fly) protein is Glyceraldehyde-3-phosphate dehydrogenase 2 (Gapdh2).